Here is a 242-residue protein sequence, read N- to C-terminus: 1-(5-phosphoribosyl)-5-[(5-phosphoribosylamino)methylideneamino] imidazole-4-carboxamide isomerase (242 aa).

Catalysis depends on aspartate 8, which acts as the Proton acceptor. The active-site Proton donor is aspartate 130.

Belongs to the HisA/HisF family.

It localises to the cytoplasm. The enzyme catalyses 1-(5-phospho-beta-D-ribosyl)-5-[(5-phospho-beta-D-ribosylamino)methylideneamino]imidazole-4-carboxamide = 5-[(5-phospho-1-deoxy-D-ribulos-1-ylimino)methylamino]-1-(5-phospho-beta-D-ribosyl)imidazole-4-carboxamide. The protein operates within amino-acid biosynthesis; L-histidine biosynthesis; L-histidine from 5-phospho-alpha-D-ribose 1-diphosphate: step 4/9. In Thioalkalivibrio sulfidiphilus (strain HL-EbGR7), this protein is 1-(5-phosphoribosyl)-5-[(5-phosphoribosylamino)methylideneamino] imidazole-4-carboxamide isomerase.